Here is a 579-residue protein sequence, read N- to C-terminus: Moesin a (579 aa).

The FERM domain maps to 5 to 295 (ISVRVTTMDA…GNHELYMRRR (291 aa)). The stretch at 306-448 (KAQAKEEKNH…EDEALEWQTK (143 aa)) forms a coiled coil. Disordered regions lie at residues 308 to 341 (QAKE…EKIE), 376 to 418 (EQER…EHLA), and 464 to 519 (KNKV…KNER). The segment covering 376–400 (EQERKRAQEEAERLERERRLAEEAK) has biased composition (basic and acidic residues). A compositionally biased stretch (low complexity) spans 490-501 (AEASAELTSAAA). Over residues 502 to 519 (YKDRSEEERMTEAEKNER) the composition is skewed to basic and acidic residues. Positions 517–551 (NERVQKHLLALTSELANARDETKKTQNDIIHAENV) form a coiled coil.

The protein resides in the cell membrane. It localises to the cell junction. Its function is as follows. Positively regulates endothelial adherens junction formation and stabilization. Is thereby required for intersegmental vessel luminal membrane formation and stabilization during tubulogenesis in the early stages of development, independent of blood flow dynamics. The protein is Moesin a of Danio rerio (Zebrafish).